Consider the following 446-residue polypeptide: Nitrate/nitrite binding protein NrtA (446 aa).

The N-terminal stretch at 1 to 28 (MSNFSRSTRRKFMFTAGAAAIGGVVLHG) is a signal peptide. A lipid anchor (N-palmitoyl cysteine) is attached at cysteine 29. Residue cysteine 29 is the site of S-diacylglycerol cysteine attachment. Tryptophan 102, glutamine 155, histidine 196, glycine 240, and lysine 269 together coordinate nitrate.

It belongs to the CmpA/NrtA family. In terms of assembly, the complex is composed of two ATP-binding proteins (NrtC and NrtD), two transmembrane proteins (NrtB) and a solute-binding protein (NrtA).

The protein resides in the cell inner membrane. Part of the ABC transporter complex NrtABCD involved in nitrate uptake. The complex is probably also involved in nitrite transport. NrtA is the substrate-binding protein. Binds nitrate. The polypeptide is Nitrate/nitrite binding protein NrtA (Synechocystis sp. (strain ATCC 27184 / PCC 6803 / Kazusa)).